Here is a 348-residue protein sequence, read N- to C-terminus: MTVRIAINGFGRIGRNVVRALYESGRRAEITVVAINELADAAGMAHLLKYDTSHGRFAWEVRHEREQLFVGDDVIRILHERTLADLPWRELGVDVVLDCTGVYGNREHGEAHIAAGAKKVLFSHPGSNDLDATVVFGVNQNQLRAEHRIVSNASCTTNCIIPVIKLLDDAYGIESGTVTTIHSAMNDQQVIDAYHSDLRRTRAASQSIIPVDTKLAAGITRIFPQFNDRFEAIAVRVPTINVTAIDLSVTVKKPVKASEVNQLLQKAAQGAFHGIVDYTESPLVSIDFNHDPHSAIVDGTQTRVSGAHLIKTLVWCDNEWGFANRMLDTTLAMAAVGFRLDASASTKL.

NAD(+) contacts are provided by residues R12–I13 and R81. Residues S154–T156, R200, T213–K214, and R236 contribute to the substrate site. C155 (nucleophile) is an active-site residue. Position 318 (N318) interacts with NAD(+).

This sequence belongs to the glyceraldehyde-3-phosphate dehydrogenase family. Epd subfamily. As to quaternary structure, homotetramer.

The protein localises to the cytoplasm. The enzyme catalyses D-erythrose 4-phosphate + NAD(+) + H2O = 4-phospho-D-erythronate + NADH + 2 H(+). It participates in cofactor biosynthesis; pyridoxine 5'-phosphate biosynthesis; pyridoxine 5'-phosphate from D-erythrose 4-phosphate: step 1/5. In terms of biological role, catalyzes the NAD-dependent conversion of D-erythrose 4-phosphate to 4-phosphoerythronate. The protein is D-erythrose-4-phosphate dehydrogenase of Salmonella agona (strain SL483).